The following is a 339-amino-acid chain: 4-dimethylallyltryptophan N-methyltransferase easF (339 aa).

This sequence belongs to the methyltransferase superfamily. As to quaternary structure, homodimer.

The catalysed reaction is 4-(3-methylbut-2-enyl)-L-tryptophan + S-adenosyl-L-methionine = 4-(3-methylbut-2-enyl)-L-abrine + S-adenosyl-L-homocysteine + H(+). It functions in the pathway alkaloid biosynthesis; ergot alkaloid biosynthesis. Functionally, 4-dimethylallyltryptophan N-methyltransferase; part of the gene cluster that mediates the biosynthesis of fumiclavanine C, a fungal ergot alkaloid. DmaW catalyzes the first step of ergot alkaloid biosynthesis by condensing dimethylallyl diphosphate (DMAP) and tryptophan to form 4-dimethylallyl-L-tryptophan. The second step is catalyzed by the methyltransferase easF that methylates 4-dimethylallyl-L-tryptophan in the presence of S-adenosyl-L-methionine, resulting in the formation of 4-dimethylallyl-L-abrine. The catalase easC and the FAD-dependent oxidoreductase easE then transform 4-dimethylallyl-L-abrine to chanoclavine-I which is further oxidized by EasD in the presence of NAD(+), resulting in the formation of chanoclavine-I aldehyde. EasA reduces chanoclavine-I aldehyde to dihydrochanoclavine-I aldehyde that spontaneously dehydrates to form 6,8-dimethyl-6,7-didehydroergoline. EasG then catalyzes the reduction of 6,8-dimethyl-6,7-didehydroergoline to form festuclavine. Hydrolysis of festuclavine by easM then leads to the formation of fumigaclavine B which is in turn acetylated by easN to fumigaclavine A. Finally, easL catalyzes the conversion of fumigaclavine A into fumigaclavine C by attaching a dimethylallyl moiety to C-2 of the indole nucleus. This is 4-dimethylallyltryptophan N-methyltransferase easF from Aspergillus fumigatus (strain ATCC MYA-4609 / CBS 101355 / FGSC A1100 / Af293) (Neosartorya fumigata).